The primary structure comprises 149 residues: Transcription antitermination protein NusB (149 aa).

This sequence belongs to the NusB family.

Involved in transcription antitermination. Required for transcription of ribosomal RNA (rRNA) genes. Binds specifically to the boxA antiterminator sequence of the ribosomal RNA (rrn) operons. This chain is Transcription antitermination protein NusB, found in Acinetobacter baumannii (strain SDF).